The chain runs to 541 residues: Metal transporter Nramp6 (541 aa).

The segment covering 1 to 18 (MAPLPAAATATASSAATP) has biased composition (low complexity). The disordered stretch occupies residues 1–44 (MAPLPAAATATASSAATPADDEAHSLLPSTPSNEEDDDDLEERA). 12 helical membrane passes run 87 to 107 (LWLF…PGNL), 120 to 140 (TLLW…LLAA), 172 to 192 (VAMV…IKIL), 196 to 216 (FLPL…FLSL), 224 to 244 (LEAV…WMFT), 270 to 290 (AVGV…SALV), 316 to 336 (IALA…AKGF), 358 to 378 (FGGG…AAGQ), 404 to 424 (IRSL…ALFF), 436 to 456 (WLNV…ITLV), 474 to 494 (VTWT…LDFF), and 502 to 522 (LSGS…LYLI).

Belongs to the NRAMP (TC 2.A.55) family.

It is found in the membrane. In terms of biological role, probable metal transporter. The polypeptide is Metal transporter Nramp6 (NRAMP6) (Oryza sativa subsp. japonica (Rice)).